We begin with the raw amino-acid sequence, 331 residues long: Tryptophan--tRNA ligase 1 (331 aa).

ATP contacts are provided by residues 9 to 11 (KPT) and 17 to 18 (GN). Residues 10-18 (PTGHLTLGN) carry the 'HIGH' region motif. Position 137 (Asp-137) interacts with L-tryptophan. Residues 149 to 151 (GDD), Val-188, and 197 to 201 (KMGKS) each bind ATP. The short motif at 197-201 (KMGKS) is the 'KMSKS' region element.

Belongs to the class-I aminoacyl-tRNA synthetase family. As to quaternary structure, homodimer.

The protein resides in the cytoplasm. It catalyses the reaction tRNA(Trp) + L-tryptophan + ATP = L-tryptophyl-tRNA(Trp) + AMP + diphosphate + H(+). In terms of biological role, catalyzes the attachment of tryptophan to tRNA(Trp). The chain is Tryptophan--tRNA ligase 1 from Streptomyces avermitilis (strain ATCC 31267 / DSM 46492 / JCM 5070 / NBRC 14893 / NCIMB 12804 / NRRL 8165 / MA-4680).